Here is a 22-residue protein sequence, read N- to C-terminus: Chlorate reductase subunit gamma (22 aa).

Residues 1-22 (EXSEQNPNILEIKPGDTVKVXT) are disordered.

In terms of assembly, heterotrimer of alpha, beta and gamma subunits. It depends on heme b as a cofactor.

The protein localises to the cytoplasm. May transfer electrons to the iron-sulfur centers of the beta subunit of chlorate reductase. This is Chlorate reductase subunit gamma from Stutzerimonas chloritidismutans (Pseudomonas chloritidismutans).